The chain runs to 1057 residues: Carbamoyl phosphate synthase large chain (1057 aa).

The carboxyphosphate synthetic domain stretch occupies residues 1-401 (MPKRDDIQTI…SLLKAIRSLE (401 aa)). 12 residues coordinate ATP: R129, R169, G175, G176, K208, I210, E215, G241, I242, H243, Q284, and E298. In terms of domain architecture, ATP-grasp 1 spans 133–327 (RTLMNDLNVP…IAKLAAKIAV (195 aa)). Mg(2+)-binding residues include Q284, E298, and N300. Q284, E298, and N300 together coordinate Mn(2+). Residues 402–546 (YGVHHLGLPN…YGTYEDENES (145 aa)) are oligomerization domain. Positions 547–929 (IVTDKEKILV…ALYKGLTGSG (383 aa)) are carbamoyl phosphate synthetic domain. Positions 671–861 (EALLREISVP…MAQLAMRAIM (191 aa)) constitute an ATP-grasp 2 domain. Residues R707, R746, L748, E752, G777, V778, H779, S780, Q820, and E832 each coordinate ATP. Mg(2+) contacts are provided by Q820, E832, and N834. Mn(2+)-binding residues include Q820, E832, and N834. Residues 930 to 1057 (FEVKDHGTVL…ESMTFTMRNV (128 aa)) form the MGS-like domain. Residues 930-1057 (FEVKDHGTVL…ESMTFTMRNV (128 aa)) form an allosteric domain region.

This sequence belongs to the CarB family. Composed of two chains; the small (or glutamine) chain promotes the hydrolysis of glutamine to ammonia, which is used by the large (or ammonia) chain to synthesize carbamoyl phosphate. Tetramer of heterodimers (alpha,beta)4. Mg(2+) serves as cofactor. It depends on Mn(2+) as a cofactor.

It catalyses the reaction hydrogencarbonate + L-glutamine + 2 ATP + H2O = carbamoyl phosphate + L-glutamate + 2 ADP + phosphate + 2 H(+). It carries out the reaction hydrogencarbonate + NH4(+) + 2 ATP = carbamoyl phosphate + 2 ADP + phosphate + 2 H(+). It functions in the pathway amino-acid biosynthesis; L-arginine biosynthesis; carbamoyl phosphate from bicarbonate: step 1/1. Its pathway is pyrimidine metabolism; UMP biosynthesis via de novo pathway; (S)-dihydroorotate from bicarbonate: step 1/3. Large subunit of the glutamine-dependent carbamoyl phosphate synthetase (CPSase). CPSase catalyzes the formation of carbamoyl phosphate from the ammonia moiety of glutamine, carbonate, and phosphate donated by ATP, constituting the first step of 2 biosynthetic pathways, one leading to arginine and/or urea and the other to pyrimidine nucleotides. The large subunit (synthetase) binds the substrates ammonia (free or transferred from glutamine from the small subunit), hydrogencarbonate and ATP and carries out an ATP-coupled ligase reaction, activating hydrogencarbonate by forming carboxy phosphate which reacts with ammonia to form carbamoyl phosphate. The polypeptide is Carbamoyl phosphate synthase large chain (Staphylococcus epidermidis (strain ATCC 35984 / DSM 28319 / BCRC 17069 / CCUG 31568 / BM 3577 / RP62A)).